We begin with the raw amino-acid sequence, 449 residues long: POU domain, class 3, transcription factor 1 (449 aa).

Disordered regions lie at residues 1–22 (MATT…TGPL), 76–108 (GGGG…GGGG), 132–152 (AHHL…HQPQ), 184–251 (GLHH…PSSD), and 393–449 (KRMT…GSVQ). Gly residues-rich tracts occupy residues 11 to 20 (GPGGGAGGTG) and 93 to 108 (AGGG…GGGG). The span at 132-143 (AHHLGPAMSPSP) shows a compositional bias: low complexity. Over residues 188–197 (ALHEDGHEAQ) the composition is skewed to basic and acidic residues. Over residues 218–230 (AGGLHAAAAHLHP) the composition is skewed to low complexity. A POU-specific domain is found at 245 to 319 (EDAPSSDDLE…LLNKWLEETD (75 aa)). The segment at residues 337–396 (KRKKRTSIEVGVKGALESHFLKCPKPSAHEITGLADSLQLEKEVVRVWFCNRRQKEKRMT) is a DNA-binding region (homeobox). Positions 425 to 434 (PSAPPPPPPA) are enriched in pro residues.

Belongs to the POU transcription factor family. Class-3 subfamily.

The protein localises to the nucleus. Its function is as follows. Transcription factor that binds to the octamer motif (5'-ATTTGCAT-3'). Acts as a transcriptional activator when binding cooperatively with SOX4, SOX11, or SOX12 to gene promoters. Acts as a transcriptional repressor of myelin-specific genes. This Mus musculus (Mouse) protein is POU domain, class 3, transcription factor 1 (Pou3f1).